Consider the following 423-residue polypeptide: Mitogen-activated protein kinase 9 (423 aa).

The region spanning 26-321 (YQQLKPIGSG…VDEALRHPYI (296 aa)) is the Protein kinase domain. Residues 32–40 (IGSGAQGIV) and Lys55 contribute to the ATP site. Asp151 (proton acceptor) is an active-site residue. Thr183 bears the Phosphothreonine; by MAP2K7 mark. Residues 183–185 (TPY) carry the TXY motif. Tyr185 carries the phosphotyrosine; by MAP2K4 modification. Over residues 366–375 (RSKNGVKDQP) the composition is skewed to basic and acidic residues. A disordered region spans residues 366-423 (RSKNGVKDQPSDAAVSSKATPSQSSSINDISSMSTEHTLASDTDSSLDASTGPLEGCR). Residues 387–416 (SQSSSINDISSMSTEHTLASDTDSSLDAST) show a composition bias toward low complexity.

Belongs to the protein kinase superfamily. CMGC Ser/Thr protein kinase family. MAP kinase subfamily. Interacts with MECOM. Binds to at least four scaffolding proteins, MAPK8IP1/JIP-1, MAPK8IP2/JIP-2, MAPK8IP3/JIP-3/JSAP1 and SPAG9/MAPK8IP4/JIP-4. These proteins also bind other components of the JNK signaling pathway. Interacts with NFATC4. Interacts with ATF7; the interaction does not phosphorylate ATF7 but acts as a docking site for ATF7-associated partners such as JUN. Interacts with BCL10. Interacts with CTNNB1 and GSK3B. Interacts with DCLK2. Interacts with MAPKBP1. Interacts with POU5F1; phosphorylates POU5F1 at 'Ser-347'. Found in a complex with SH3RF1, RAC2, MAP3K7/TAK1, MAP2K7/MKK7, MAPK8IP1/JIP1 and MAPK8/JNK1. Mg(2+) is required as a cofactor. Post-translationally, dually phosphorylated on Thr-183 and Tyr-185 by MAP2K7 and MAP2K4, which activates the enzyme. Autophosphorylated in vitro.

Its subcellular location is the cytoplasm. It localises to the nucleus. The enzyme catalyses L-seryl-[protein] + ATP = O-phospho-L-seryl-[protein] + ADP + H(+). It catalyses the reaction L-threonyl-[protein] + ATP = O-phospho-L-threonyl-[protein] + ADP + H(+). Its activity is regulated as follows. Activated by threonine and tyrosine phosphorylation by either of two dual specificity kinases, MAP2K4 and MAP2K7. MAP2K4 shows a strong preference for Tyr-185 while MAP2K7 phosphorylates Tyr-183 preferentially. Inhibited by dual specificity phosphatases, such as DUSP1. In terms of biological role, serine/threonine-protein kinase involved in various processes such as cell proliferation, differentiation, migration, transformation and programmed cell death. Extracellular stimuli such as pro-inflammatory cytokines or physical stress stimulate the stress-activated protein kinase/c-Jun N-terminal kinase (SAP/JNK) signaling pathway. In this cascade, two dual specificity kinases MAP2K4/MKK4 and MAP2K7/MKK7 phosphorylate and activate MAPK9/JNK2. In turn, MAPK9/JNK2 phosphorylates a number of transcription factors, primarily components of AP-1 such as JUN and ATF2 and thus regulates AP-1 transcriptional activity. In response to oxidative or ribotoxic stresses, inhibits rRNA synthesis by phosphorylating and inactivating the RNA polymerase 1-specific transcription initiation factor RRN3. Promotes stressed cell apoptosis by phosphorylating key regulatory factors including TP53 and YAP1. In T-cells, MAPK8 and MAPK9 are required for polarized differentiation of T-helper cells into Th1 cells. Upon T-cell receptor (TCR) stimulation, is activated by CARMA1, BCL10, MAP2K7 and MAP3K7/TAK1 to regulate JUN protein levels. Plays an important role in the osmotic stress-induced epithelial tight-junctions disruption. When activated, promotes beta-catenin/CTNNB1 degradation and inhibits the canonical Wnt signaling pathway. Also participates in neurite growth in spiral ganglion neurons. Phosphorylates the CLOCK-BMAL1 heterodimer and plays a role in the regulation of the circadian clock. Phosphorylates POU5F1, which results in the inhibition of POU5F1's transcriptional activity and enhances its proteasomal degradation. Phosphorylates ALKBH5 in response to reactive oxygen species (ROS), promoting ALKBH5 sumoylation and inactivation. This chain is Mitogen-activated protein kinase 9 (Mapk9), found in Rattus norvegicus (Rat).